Consider the following 359-residue polypeptide: Dual-specificity RNA methyltransferase RlmN (359 aa).

Glu86 acts as the Proton acceptor in catalysis. Residues 105–338 (EGEKYTICVS…CTIRESKGID (234 aa)) form the Radical SAM core domain. A disulfide bond links Cys112 and Cys343. [4Fe-4S] cluster is bound by residues Cys119, Cys123, and Cys126. S-adenosyl-L-methionine-binding positions include 169-170 (GE), Ser201, 224-226 (SLH), and Asn300. Cys343 acts as the S-methylcysteine intermediate in catalysis.

Belongs to the radical SAM superfamily. RlmN family. It depends on [4Fe-4S] cluster as a cofactor.

Its subcellular location is the cytoplasm. The catalysed reaction is adenosine(2503) in 23S rRNA + 2 reduced [2Fe-2S]-[ferredoxin] + 2 S-adenosyl-L-methionine = 2-methyladenosine(2503) in 23S rRNA + 5'-deoxyadenosine + L-methionine + 2 oxidized [2Fe-2S]-[ferredoxin] + S-adenosyl-L-homocysteine. It carries out the reaction adenosine(37) in tRNA + 2 reduced [2Fe-2S]-[ferredoxin] + 2 S-adenosyl-L-methionine = 2-methyladenosine(37) in tRNA + 5'-deoxyadenosine + L-methionine + 2 oxidized [2Fe-2S]-[ferredoxin] + S-adenosyl-L-homocysteine. Functionally, specifically methylates position 2 of adenine 2503 in 23S rRNA and position 2 of adenine 37 in tRNAs. m2A2503 modification seems to play a crucial role in the proofreading step occurring at the peptidyl transferase center and thus would serve to optimize ribosomal fidelity. The polypeptide is Dual-specificity RNA methyltransferase RlmN (Wolinella succinogenes (strain ATCC 29543 / DSM 1740 / CCUG 13145 / JCM 31913 / LMG 7466 / NCTC 11488 / FDC 602W) (Vibrio succinogenes)).